A 166-amino-acid chain; its full sequence is uncharacterized protein (166 aa).

ATP is bound at residue 117 to 124 (AAKSGGKT).

This is an uncharacterized protein from Mycoplasma pneumoniae (strain ATCC 29342 / M129 / Subtype 1) (Mycoplasmoides pneumoniae).